The chain runs to 233 residues: Pre-hexon-linking protein VIII (233 aa).

Threonine 64 is modified (phosphothreonine; by host). The propeptide occupies 112 to 163; sequence ARHVRFRDRPSPYSSGSIKRLIIRGRGIQLNDEVVSSSTGPRPDGVFQLGGA. At serine 180 the chain carries Phosphoserine; by host.

This sequence belongs to the adenoviridae hexon-linking protein family. In terms of assembly, interacts with the peripentonal hexons as well as the hexons in the facets. Part of a complex composed of the core-capsid bridging protein, the endosome lysis protein VI and the hexon-linking protein VIII; these interactions bridge the virus core to the capsid. Post-translationally, cleaved by the viral protease during virion maturation. May cause the middle segment to be shed from the capsid.

It localises to the virion. The protein resides in the host nucleus. Functionally, structural component of the virion that acts as a cement protein on the capsid interior and which glue the peripentonal hexons and group-of-nine hexons together. In Homo sapiens (Human), this protein is Pre-hexon-linking protein VIII.